The primary structure comprises 795 residues: Oleate activated transcription factor 3 (795 aa).

A DNA-binding region (zn(2)-C6 fungal-type) is located at residues 14-43 (CSNCKRRKSRCDRGKPACGNCIRLGNRETC).

Belongs to the OAF3 family.

The protein localises to the cytoplasm. Its subcellular location is the nucleus. It localises to the mitochondrion. In terms of biological role, transcriptional inhibitor with a significantly increased number of target genes in response to oleate. This Eremothecium gossypii (strain ATCC 10895 / CBS 109.51 / FGSC 9923 / NRRL Y-1056) (Yeast) protein is Oleate activated transcription factor 3 (OAF3).